The primary structure comprises 262 residues: MAVISMKQLLEAGVHFGHQTRRWNPKMKKYIFTERNGIYIIDLQKTVKKVEEAYNFVKQISEEGGKVLFVGTKKQAQESVKAEAERAGQFYVNQRWLGGILTNYKTISKRIKRISEIEKMEEDGLFEVLPKKEVVELKKEYDRLIKFLGGIRDMKSMPQALFVVDPRKERNAIAEARKLNIPIVGIVDTNCDPDEIDYVIPANDDAIRAVKLLTGKMADAILEGQQGVSNEEVAAEQNINLDDKEESEQAETTEENTSVESN.

The segment at 228 to 262 (VSNEEVAAEQNINLDDKEESEQAETTEENTSVESN) is disordered. The segment covering 243–254 (DKEESEQAETTE) has biased composition (acidic residues).

The protein belongs to the universal ribosomal protein uS2 family.

This is Small ribosomal subunit protein uS2 from Staphylococcus epidermidis (strain ATCC 35984 / DSM 28319 / BCRC 17069 / CCUG 31568 / BM 3577 / RP62A).